The following is a 369-amino-acid chain: Small ribosomal subunit biogenesis GTPase RsgA (369 aa).

The CP-type G domain occupies 116–271; it reads GEQLIAANLD…LIDNPGIREI (156 aa). Residues 161–164 and 213–221 each bind GTP; these read NKID and GSSGVGKST. 4 residues coordinate Zn(2+): Cys-294, Cys-299, His-301, and Cys-307.

The protein belongs to the TRAFAC class YlqF/YawG GTPase family. RsgA subfamily. As to quaternary structure, monomer. Associates with 30S ribosomal subunit, binds 16S rRNA. It depends on Zn(2+) as a cofactor.

Its subcellular location is the cytoplasm. One of several proteins that assist in the late maturation steps of the functional core of the 30S ribosomal subunit. Helps release RbfA from mature subunits. May play a role in the assembly of ribosomal proteins into the subunit. Circularly permuted GTPase that catalyzes slow GTP hydrolysis, GTPase activity is stimulated by the 30S ribosomal subunit. This chain is Small ribosomal subunit biogenesis GTPase RsgA, found in Methanosarcina acetivorans (strain ATCC 35395 / DSM 2834 / JCM 12185 / C2A).